The chain runs to 215 residues: FBD domain-containing protein At3g58975 (215 aa).

Residues 122–199 enclose the FBD domain; it reads RSLTSCPVKK…KLSSCNVQLL (78 aa).

This chain is FBD domain-containing protein At3g58975, found in Arabidopsis thaliana (Mouse-ear cress).